Reading from the N-terminus, the 748-residue chain is Rho GTPase-activating protein 24 (748 aa).

The 107-residue stretch at 18–124 (NATKCGWLRK…WVKSIRRVIW (107 aa)) folds into the PH domain. Residues 134–328 (QKLEDTVRYE…VMISKHDRLF (195 aa)) enclose the Rho-GAP domain. Positions 328-476 (FPKDTEPQSK…SSGTKMGTHS (149 aa)) are disordered. Composition is skewed to polar residues over residues 335-347 (QSKPQEGPNSNNN) and 356-368 (GQLQNKENNNTKE). Ser369, Ser391, Ser396, Ser398, Ser402, Ser413, Ser415, and Ser437 each carry phosphoserine. The span at 369–381 (SPVRRCSWDKPES) shows a compositional bias: basic and acidic residues. The span at 382–405 (PQRSSMDNGSPTALSGSKTNSPRN) shows a compositional bias: polar residues. Residues 432–476 (IVTNGSFSSSNAEGVEKTQTTPNGSLQARRTSSLKSSGTKMGTHS) show a composition bias toward polar residues. Thr452 carries the post-translational modification Phosphothreonine. The residue at position 495 (Ser495) is a Phosphoserine. Residues 582–640 (DFYGGNFEDPVLDGPPQDDLSHPGDYENKSDRRSVGGRSSRATSSSDNSETFVGNTSSN) form a disordered region. A compositionally biased stretch (basic and acidic residues) spans 600–615 (DLSHPGDYENKSDRRS). The segment covering 617-630 (GGRSSRATSSSDNS) has biased composition (low complexity). Over residues 631–640 (ETFVGNTSSN) the composition is skewed to polar residues. Residues 649 to 729 (SSLKQEMTKQ…KEMEQFFSTF (81 aa)) adopt a coiled-coil conformation.

Interacts with FLNA. Phosphorylated by ROCK, leading to activate the RacGAP activity.

Its subcellular location is the cytoplasm. It localises to the cytoskeleton. The protein localises to the cell junction. The protein resides in the adherens junction. It is found in the focal adhesion. Its subcellular location is the cell projection. In terms of biological role, rho GTPase-activating protein involved in cell polarity, cell morphology and cytoskeletal organization. Acts as a GTPase activator for the Rac-type GTPase by converting it to an inactive GDP-bound state. Controls actin remodeling by inactivating Rac downstream of Rho leading to suppress leading edge protrusion and promotes cell retraction to achieve cellular polarity. Able to suppress RAC1 and CDC42 activity in vitro. Overexpression induces cell rounding with partial or complete disruption of actin stress fibers and formation of membrane ruffles, lamellipodia, and filopodia. Isoform 2 is a vascular cell-specific GAP involved in modulation of angiogenesis. This chain is Rho GTPase-activating protein 24 (Arhgap24), found in Rattus norvegicus (Rat).